The primary structure comprises 165 residues: Nucleoside-triphosphatase THEP1 (165 aa).

Residues 7–14 (GRPGVGKT) and 93–100 (LVIIDEVG) contribute to the ATP site.

Belongs to the THEP1 NTPase family.

The catalysed reaction is a ribonucleoside 5'-triphosphate + H2O = a ribonucleoside 5'-diphosphate + phosphate + H(+). Its function is as follows. Has nucleotide phosphatase activity towards ATP, GTP, CTP, TTP and UTP. May hydrolyze nucleoside diphosphates with lower efficiency. The chain is Nucleoside-triphosphatase THEP1 from Archaeoglobus fulgidus (strain ATCC 49558 / DSM 4304 / JCM 9628 / NBRC 100126 / VC-16).